Consider the following 754-residue polypeptide: 5-methyltetrahydropteroyltriglutamate--homocysteine methyltransferase (754 aa).

5-methyltetrahydropteroyltri-L-glutamate is bound by residues 17–20 (RELK) and K110. L-homocysteine is bound by residues 421–423 (IGS) and E474. L-methionine-binding positions include 421–423 (IGS) and E474. Residues 505-506 (RC) and W551 contribute to the 5-methyltetrahydropteroyltri-L-glutamate site. Position 589 (D589) interacts with L-homocysteine. D589 provides a ligand contact to L-methionine. A 5-methyltetrahydropteroyltri-L-glutamate-binding site is contributed by E595. Zn(2+) is bound by residues H631, C633, and E655. Catalysis depends on H684, which acts as the Proton donor. Residue C716 participates in Zn(2+) binding.

The protein belongs to the vitamin-B12 independent methionine synthase family. The cofactor is Zn(2+).

The catalysed reaction is 5-methyltetrahydropteroyltri-L-glutamate + L-homocysteine = tetrahydropteroyltri-L-glutamate + L-methionine. The protein operates within amino-acid biosynthesis; L-methionine biosynthesis via de novo pathway; L-methionine from L-homocysteine (MetE route): step 1/1. Its function is as follows. Catalyzes the transfer of a methyl group from 5-methyltetrahydrofolate to homocysteine resulting in methionine formation. The chain is 5-methyltetrahydropteroyltriglutamate--homocysteine methyltransferase from Synechococcus sp. (strain JA-2-3B'a(2-13)) (Cyanobacteria bacterium Yellowstone B-Prime).